The sequence spans 395 residues: Acetate kinase (395 aa).

Asparagine 10 contributes to the Mg(2+) binding site. ATP is bound at residue lysine 17. Arginine 87 is a binding site for substrate. The active-site Proton donor/acceptor is aspartate 144. ATP is bound by residues 204 to 208 (HLGNG), 279 to 281 (DMR), and 327 to 331 (GIGEN). Glutamate 381 provides a ligand contact to Mg(2+).

It belongs to the acetokinase family. Homodimer. It depends on Mg(2+) as a cofactor. The cofactor is Mn(2+).

The protein localises to the cytoplasm. The enzyme catalyses acetate + ATP = acetyl phosphate + ADP. It functions in the pathway metabolic intermediate biosynthesis; acetyl-CoA biosynthesis; acetyl-CoA from acetate: step 1/2. Functionally, catalyzes the formation of acetyl phosphate from acetate and ATP. Can also catalyze the reverse reaction. The chain is Acetate kinase from Stutzerimonas stutzeri (strain A1501) (Pseudomonas stutzeri).